A 963-amino-acid chain; its full sequence is Protein translocase subunit SecA (963 aa).

ATP is bound by residues glutamine 87, 105–109 (GEGKT), and aspartate 524. 4 residues coordinate Zn(2+): cysteine 946, cysteine 948, cysteine 957, and histidine 958.

This sequence belongs to the SecA family. As to quaternary structure, monomer and homodimer. Part of the essential Sec protein translocation apparatus which comprises SecA, SecYEG and auxiliary proteins SecDF-YajC and YidC. Zn(2+) is required as a cofactor.

The protein localises to the cell inner membrane. The protein resides in the cytoplasm. The catalysed reaction is ATP + H2O + cellular proteinSide 1 = ADP + phosphate + cellular proteinSide 2.. In terms of biological role, part of the Sec protein translocase complex. Interacts with the SecYEG preprotein conducting channel. Has a central role in coupling the hydrolysis of ATP to the transfer of proteins into and across the cell membrane, serving both as a receptor for the preprotein-SecB complex and as an ATP-driven molecular motor driving the stepwise translocation of polypeptide chains across the membrane. This chain is Protein translocase subunit SecA, found in Methylobacterium radiotolerans (strain ATCC 27329 / DSM 1819 / JCM 2831 / NBRC 15690 / NCIMB 10815 / 0-1).